We begin with the raw amino-acid sequence, 322 residues long: Undecaprenyl-phosphate 4-deoxy-4-formamido-L-arabinose transferase (322 aa).

Topologically, residues 1–235 are cytoplasmic; that stretch reads MFEIHPVKKV…TCLTTTPLRM (235 aa). Residues 236–256 traverse the membrane as a helical segment; the sequence is LSLLGSIIAIGGFSIAVLLVI. Residues 257–269 are Periplasmic-facing; the sequence is LRLTFGPQWAAEG. A helical membrane pass occupies residues 270–290; that stretch reads VFMLFAVLFTFIGAQFIGMGL. Topologically, residues 291–322 are cytoplasmic; it reads LGEYIGRIYTDVRARPRYFVQQVIRPSSKENE.

Belongs to the glycosyltransferase 2 family.

The protein localises to the cell inner membrane. The enzyme catalyses UDP-4-deoxy-4-formamido-beta-L-arabinose + di-trans,octa-cis-undecaprenyl phosphate = 4-deoxy-4-formamido-alpha-L-arabinopyranosyl di-trans,octa-cis-undecaprenyl phosphate + UDP. The protein operates within glycolipid biosynthesis; 4-amino-4-deoxy-alpha-L-arabinose undecaprenyl phosphate biosynthesis; 4-amino-4-deoxy-alpha-L-arabinose undecaprenyl phosphate from UDP-4-deoxy-4-formamido-beta-L-arabinose and undecaprenyl phosphate: step 1/2. It participates in bacterial outer membrane biogenesis; lipopolysaccharide biosynthesis. In terms of biological role, catalyzes the transfer of 4-deoxy-4-formamido-L-arabinose from UDP to undecaprenyl phosphate. The modified arabinose is attached to lipid A and is required for resistance to polymyxin and cationic antimicrobial peptides. The chain is Undecaprenyl-phosphate 4-deoxy-4-formamido-L-arabinose transferase from Escherichia coli O7:K1 (strain IAI39 / ExPEC).